Reading from the N-terminus, the 305-residue chain is Catechol 1,2-dioxygenase (305 aa).

Fe cation contacts are provided by Tyr-163, Tyr-197, His-221, and His-223.

It belongs to the intradiol ring-cleavage dioxygenase family. Homodimer. Fe(3+) serves as cofactor.

The enzyme catalyses catechol + O2 = cis,cis-muconate + 2 H(+). It functions in the pathway aromatic compound metabolism; beta-ketoadipate pathway; 5-oxo-4,5-dihydro-2-furylacetate from catechol: step 1/3. The protein is Catechol 1,2-dioxygenase (catA) of Acinetobacter guillouiae (Acinetobacter genomosp. 11).